The chain runs to 170 residues: CFA/I fimbrial subunit B (170 aa).

A signal peptide spans 1 to 23 (MKFKKTIGAMALTTMFVAVSASA).

This sequence belongs to the fimbrial CS1 protein family. In terms of assembly, CFA/I fimbriae are rather rigid, thread-like filaments of 0.5-1 micrometer, with an apparent axial hole, and a diameter of 7 nanometers. A single CFA/I fimbria consists of about 100 identical protein subunits.

The protein localises to the fimbrium. Its function is as follows. Fimbriae (also called pili), polar filaments radiating from the surface of the bacterium to a length of 0.5-1.5 micrometers and numbering 100-300 per cell, enable bacteria to colonize the epithelium of specific host organs. The sequence is that of CFA/I fimbrial subunit B (cfaB) from Escherichia coli.